The chain runs to 339 residues: MSSSSSSGAATGFAVCSDPQKSFSKMFKRTVILLAGPTGSGKTAVSLKLAPLVDGEIISVDSMQVYQGMDIGTAKVSLADRKEVPHHLIDVCHVQESFNAVDFYYHAVQACQDILSRNKVPILVGGTGFYFHTFLSGPPSGPSPDFVLREQLTLEAQERGISALYQELELLDPVYAATITKHDKNKIIRALEIIRKTGSKVSSYAWQSTVNESKEYHCRGWLLSPDPELLRHNILERCDQMLEEGLLDEVQALLAAGIKGNSSASRAIGYREWIEFLDLGSPPDLFEITKQKFITNTWRYTKKQRTWFKRCSLFRELRPMGMTLDDMAKKIAQDYFLCG.

36–43 (GPTGSGKT) serves as a coordination point for ATP. A substrate-binding site is contributed by 38 to 43 (TGSGKT). Residues 61–64 (DSMQ) form an interaction with substrate tRNA region.

This sequence belongs to the IPP transferase family. In terms of assembly, monomer. The cofactor is Mg(2+).

The enzyme catalyses adenosine(37) in tRNA + dimethylallyl diphosphate = N(6)-dimethylallyladenosine(37) in tRNA + diphosphate. Catalyzes the transfer of a dimethylallyl group onto the adenine at position 37 in tRNAs that read codons beginning with uridine, leading to the formation of N6-(dimethylallyl)adenosine (i(6)A). This is tRNA dimethylallyltransferase from Chlamydia trachomatis serovar A (strain ATCC VR-571B / DSM 19440 / HAR-13).